The sequence spans 148 residues: Large ribosomal subunit protein bL9 (148 aa).

Belongs to the bacterial ribosomal protein bL9 family.

Its function is as follows. Binds to the 23S rRNA. This chain is Large ribosomal subunit protein bL9, found in Pseudomonas syringae pv. tomato (strain ATCC BAA-871 / DC3000).